Reading from the N-terminus, the 450-residue chain is Phosphoglucosamine mutase (450 aa).

Residue serine 102 is the Phosphoserine intermediate of the active site. 4 residues coordinate Mg(2+): serine 102, aspartate 243, aspartate 245, and aspartate 247. Serine 102 is modified (phosphoserine).

The protein belongs to the phosphohexose mutase family. Mg(2+) serves as cofactor. In terms of processing, activated by phosphorylation.

The catalysed reaction is alpha-D-glucosamine 1-phosphate = D-glucosamine 6-phosphate. Functionally, catalyzes the conversion of glucosamine-6-phosphate to glucosamine-1-phosphate. The protein is Phosphoglucosamine mutase of Rhizobium meliloti (strain 1021) (Ensifer meliloti).